Reading from the N-terminus, the 363-residue chain is Cleavage and termination factor 1 (363 aa).

Residues 7 to 85 form the RRM domain; it reads NVVFVGNIPY…RKIRVEFPSN (79 aa). The disordered stretch occupies residues 291-325; sequence QPASATSSPPSVPQKIPSSNHKSQQANGSDQGNEG. The span at 306–322 shows a compositional bias: polar residues; the sequence is IPSSNHKSQQANGSDQG.

In terms of assembly, interacts with res2.

It is found in the nucleus. In terms of biological role, component of the cleavage factor I (CF I) involved in pre-mRNA 3'-end processing. The chain is Cleavage and termination factor 1 (ctf1) from Schizosaccharomyces pombe (strain 972 / ATCC 24843) (Fission yeast).